The primary structure comprises 91 residues: Large ribosomal subunit protein eL43 (91 aa).

A C4-type zinc finger spans residues 38-59 (CNFCGKDSLKRKAAGIWECKAC).

The protein belongs to the eukaryotic ribosomal protein eL43 family.

The protein is Large ribosomal subunit protein eL43 of Schistosoma mansoni (Blood fluke).